We begin with the raw amino-acid sequence, 75 residues long: Protein SlyX homolog (75 aa).

The tract at residues 56–75 (KNMDSSNMEDPANEPPPPHY) is disordered.

The protein belongs to the SlyX family.

This chain is Protein SlyX homolog, found in Vibrio parahaemolyticus serotype O3:K6 (strain RIMD 2210633).